The chain runs to 276 residues: Adenylate kinase (276 aa).

51–56 (GAGKGT) serves as a coordination point for ATP. Residues 71–100 (ATGDMLRSQVAKKTPLGQAAKKIMDAGGLV) are NMP. AMP-binding positions include Thr-72, Arg-77, 98 to 100 (GLV), 127 to 130 (GFPR), and Gln-134. The tract at residues 168 to 205 (GRLVHPASGRSYHVKFNPPKKEMTDDITGEPLIQRSDD) is LID. ATP is bound by residues Arg-169 and 178 to 179 (SY). Residues Arg-202 and Arg-213 each contribute to the AMP site. Residue Gln-241 participates in ATP binding.

This sequence belongs to the adenylate kinase family. AK2 subfamily. Monomer.

It is found in the cytoplasm. The protein localises to the cytosol. The protein resides in the mitochondrion intermembrane space. The enzyme catalyses AMP + ATP = 2 ADP. In terms of biological role, catalyzes the reversible transfer of the terminal phosphate group between ATP and AMP. Plays an important role in cellular energy homeostasis and in adenine nucleotide metabolism. Adenylate kinase activity is critical for regulation of the phosphate utilization and the AMP de novo biosynthesis pathways. This is Adenylate kinase from Podospora anserina (strain S / ATCC MYA-4624 / DSM 980 / FGSC 10383) (Pleurage anserina).